A 304-amino-acid chain; its full sequence is Acetyl-coenzyme A carboxylase carboxyl transferase subunit beta (304 aa).

Residues 23 to 292 (VWTKCDSCGQ…PNPDAPREGV (270 aa)) form the CoA carboxyltransferase N-terminal domain. Zn(2+) contacts are provided by cysteine 27, cysteine 30, cysteine 46, and cysteine 49. The segment at 27-49 (CDSCGQVLYRAELERNLEVCPKC) adopts a C4-type zinc-finger fold. The interval 284 to 304 (NPDAPREGVVVPPAPDQESEV) is disordered.

Belongs to the AccD/PCCB family. As to quaternary structure, acetyl-CoA carboxylase is a heterohexamer composed of biotin carboxyl carrier protein (AccB), biotin carboxylase (AccC) and two subunits each of ACCase subunit alpha (AccA) and ACCase subunit beta (AccD). It depends on Zn(2+) as a cofactor.

Its subcellular location is the cytoplasm. It carries out the reaction N(6)-carboxybiotinyl-L-lysyl-[protein] + acetyl-CoA = N(6)-biotinyl-L-lysyl-[protein] + malonyl-CoA. It functions in the pathway lipid metabolism; malonyl-CoA biosynthesis; malonyl-CoA from acetyl-CoA: step 1/1. Component of the acetyl coenzyme A carboxylase (ACC) complex. Biotin carboxylase (BC) catalyzes the carboxylation of biotin on its carrier protein (BCCP) and then the CO(2) group is transferred by the transcarboxylase to acetyl-CoA to form malonyl-CoA. This is Acetyl-coenzyme A carboxylase carboxyl transferase subunit beta from Salmonella paratyphi A (strain ATCC 9150 / SARB42).